Consider the following 208-residue polypeptide: Imidazoleglycerol-phosphate dehydratase (208 aa).

This sequence belongs to the imidazoleglycerol-phosphate dehydratase family.

The protein localises to the cytoplasm. It catalyses the reaction D-erythro-1-(imidazol-4-yl)glycerol 3-phosphate = 3-(imidazol-4-yl)-2-oxopropyl phosphate + H2O. Its pathway is amino-acid biosynthesis; L-histidine biosynthesis; L-histidine from 5-phospho-alpha-D-ribose 1-diphosphate: step 6/9. In Psychrobacter sp. (strain PRwf-1), this protein is Imidazoleglycerol-phosphate dehydratase.